The following is a 476-amino-acid chain: MSGPTWLPPKQPEPARAPQGRAIPRGTPGPPPAHGAALQPHPRVNFCPLPSEQCYQAPGGPEDRGPAWVGSHGVLQHTQGLPADRGGLRPGSLDAEIDLLSSTLAELNGGRGHASRRPDRQAYEPPPPPAYRTGSLKPNPASPLPASPYGGPTPASYTTASTPAGPAFPVQVKVAQPVRGCGPPRRGASQASGPLPGPHFPLPGRGEVWGPGYRSQREPGPGAKEEAAGVSGPAGRGRGGEHGPQVPLSQPPEDELDRLTKKLVHDMNHPPSGEYFGQCGGCGEDVVGDGAGVVALDRVFHVGCFVCSTCRAQLRGQHFYAVERRAYCEGCYVATLEKCATCSQPILDRILRAMGKAYHPGCFTCVVCHRGLDGIPFTVDATSQIHCIEDFHRKFAPRCSVCGGAIMPEPGQEETVRIVALDRSFHIGCYKCEECGLLLSSEGECQGCYPLDGHILCKACSAWRIQELSATVTTDC.

The segment covering 1-12 (MSGPTWLPPKQP) has biased composition (pro residues). Disordered regions lie at residues 1 to 93 (MSGP…PGSL) and 108 to 253 (NGGR…QPPE). Arginine 25 is subject to Asymmetric dimethylarginine; alternate. The residue at position 25 (arginine 25) is an Omega-N-methylarginine; alternate. At tyrosine 55 the chain carries Phosphotyrosine; by SRC. Serine 92 carries the phosphoserine modification. Arginine 111 carries the omega-N-methylarginine modification. A Phosphoserine modification is found at serine 142. Positions 152–167 (PTPASYTTASTPAGPA) are enriched in low complexity. Residues arginine 179 and arginine 186 each carry the omega-N-methylarginine modification. Serine 189 carries the post-translational modification Phosphoserine. Omega-N-methylarginine occurs at positions 205, 236, and 238. Serine 249 bears the Phosphoserine mark. LIM zinc-binding domains follow at residues 279–316 (CGGC…QLRG), 339–398 (CATC…FAPR), and 399–467 (CSVC…RIQE). Positions 469-476 (SATVTTDC) are interaction with MAGI1 and PTPN13.

It belongs to the zyxin/ajuba family. As to quaternary structure, specifically interacts with the ligand binding domain of the thyroid receptor (TR) in the presence of thyroid hormone. Interacts (via the third LIM domain and C-terminus) with PTPN13 (via the second PDZ domain). Interacts (via the second LIM domain or via the third LIM domain plus C-terminus) with PDLIM4 (via PDZ domain). Found in a complex with PTPN13 and PDLIM4. Interacts with SVIL isoform 2. Interacts with LPAR2 but not other LPA receptors. Interacts with PRKAA2. Interacts with MAGI1. Interacts with SCRIB. In case of infection, interacts with S.typhimurium protein sseI. In terms of processing, phosphorylation at Tyr-55 by SRC is required for enhancement of lysophosphatidic acid-induced cell migration. Tyr-55 is dephosphorylated by PTPN13. As to expression, abundantly expressed in kidney, liver and lung. Lower levels in heart, placenta and pancreas. Expressed in colonic epithelial cells. Up-regulated in colonic tumors.

Its subcellular location is the cytoplasm. The protein resides in the cytoskeleton. It localises to the cell junction. It is found in the focal adhesion. The protein localises to the nucleus. In terms of biological role, relays signals from the cell surface to the nucleus to weaken adherens junction and promote actin cytoskeleton reorganization and cell invasiveness. Involved in lysophosphatidic acid-induced cell adhesion and migration. Acts as a transcriptional coactivator for NF-kappa-B and JUN, and mediates the transrepression of these transcription factors induced by glucocorticoid receptor. The polypeptide is Thyroid receptor-interacting protein 6 (TRIP6) (Homo sapiens (Human)).